A 1103-amino-acid chain; its full sequence is Centrosomal protein of 126 kDa (1103 aa).

Over residues 1–12 the composition is skewed to low complexity; sequence MLAGRPGAQSAG. The tract at residues 1-36 is disordered; sequence MLAGRPGAQSAGAGVGAGPPDAPGARDGGGRPRPGA. Coiled-coil stretches lie at residues 43-116 and 182-222; these read HLEK…FQRA and QKHL…KLLE. 2 disordered regions span residues 380-409 and 723-812; these read NTAESNVVRASDPTEGAVQRERPAQMESPT and ESKA…PGQS. Over residues 723–735 the composition is skewed to basic and acidic residues; that stretch reads ESKAPVHASDSKT. A compositionally biased stretch (basic residues) spans 736-748; it reads QKTKPQRGVKFTR. 2 stretches are compositionally biased toward polar residues: residues 763–784 and 798–812; these read RKPTVSQPQTSSKANTVAQTQG and NIKSGKNMQVSPGQS.

As to quaternary structure, interacts with DCTN1.

The protein resides in the midbody. It is found in the cytoplasm. The protein localises to the cytoskeleton. It localises to the microtubule organizing center. Its subcellular location is the centrosome. The protein resides in the cilium basal body. Its function is as follows. Participate in cytokinesis. Necessary for microtubules and mitotic spindle organization. Involved in primary cilium formation. This chain is Centrosomal protein of 126 kDa, found in Mus musculus (Mouse).